The chain runs to 159 residues: Putative polyketide cyclase (159 aa).

The protein to polyketide cyclases.

Involved in developmentally regulated synthesis of a compound biosynthetically related to polyketide antibiotics which is essential for spore color in Streptomyces coelicolor. In Streptomyces coelicolor (strain ATCC BAA-471 / A3(2) / M145), this protein is Putative polyketide cyclase.